Consider the following 275-residue polypeptide: Methylthioribulose-1-phosphate dehydratase (275 aa).

C125 is a binding site for substrate. Positions 143 and 145 each coordinate Zn(2+). The active-site Proton donor/acceptor is E168. Zn(2+) is bound at residue H233.

Belongs to the aldolase class II family. MtnB subfamily. The cofactor is Zn(2+).

The protein resides in the cytoplasm. It catalyses the reaction 5-(methylsulfanyl)-D-ribulose 1-phosphate = 5-methylsulfanyl-2,3-dioxopentyl phosphate + H2O. The protein operates within amino-acid biosynthesis; L-methionine biosynthesis via salvage pathway; L-methionine from S-methyl-5-thio-alpha-D-ribose 1-phosphate: step 2/6. In terms of biological role, catalyzes the dehydration of methylthioribulose-1-phosphate (MTRu-1-P) into 2,3-diketo-5-methylthiopentyl-1-phosphate (DK-MTP-1-P). This chain is Methylthioribulose-1-phosphate dehydratase, found in Lodderomyces elongisporus (strain ATCC 11503 / CBS 2605 / JCM 1781 / NBRC 1676 / NRRL YB-4239) (Yeast).